The primary structure comprises 125 residues: Small ribosomal subunit protein bS6 (125 aa).

The disordered stretch occupies residues 94-125 (KAETGASSMMKTVEREEARKASQAEFAASNER). Residues 105–115 (TVEREEARKAS) are compositionally biased toward basic and acidic residues.

It belongs to the bacterial ribosomal protein bS6 family.

Binds together with bS18 to 16S ribosomal RNA. The protein is Small ribosomal subunit protein bS6 of Acidovorax ebreus (strain TPSY) (Diaphorobacter sp. (strain TPSY)).